The primary structure comprises 238 residues: Orotidine 5'-phosphate decarboxylase (238 aa).

Substrate contacts are provided by residues Asp10, Lys32, 59-68 (DLKLHDIPNT), Thr122, Arg184, Gln193, Gly213, and Arg214. The Proton donor role is filled by Lys61.

The protein belongs to the OMP decarboxylase family. Type 1 subfamily. Homodimer.

It carries out the reaction orotidine 5'-phosphate + H(+) = UMP + CO2. It participates in pyrimidine metabolism; UMP biosynthesis via de novo pathway; UMP from orotate: step 2/2. Its function is as follows. Catalyzes the decarboxylation of orotidine 5'-monophosphate (OMP) to uridine 5'-monophosphate (UMP). The protein is Orotidine 5'-phosphate decarboxylase of Bacillus cytotoxicus (strain DSM 22905 / CIP 110041 / 391-98 / NVH 391-98).